The chain runs to 538 residues: Phosphoenolpyruvate carboxykinase (ATP) (538 aa).

Substrate is bound by residues Arg64, Tyr205, and Lys211. ATP contacts are provided by residues Lys211, His230, and 246–254 (GLSGTGKTT). Residues Lys211 and His230 each coordinate Mn(2+). Residue Asp267 participates in Mn(2+) binding. ATP contacts are provided by residues Glu295, Arg331, 447-448 (RI), and Thr453. Residue Arg331 coordinates substrate.

Belongs to the phosphoenolpyruvate carboxykinase (ATP) family. In terms of assembly, monomer. Mn(2+) is required as a cofactor.

It is found in the cytoplasm. It carries out the reaction oxaloacetate + ATP = phosphoenolpyruvate + ADP + CO2. It functions in the pathway carbohydrate biosynthesis; gluconeogenesis. Its function is as follows. Involved in the gluconeogenesis. Catalyzes the conversion of oxaloacetate (OAA) to phosphoenolpyruvate (PEP) through direct phosphoryl transfer between the nucleoside triphosphate and OAA. The chain is Phosphoenolpyruvate carboxykinase (ATP) from Pasteurella multocida (strain Pm70).